Here is a 159-residue protein sequence, read N- to C-terminus: 3-dehydroquinate dehydratase (159 aa).

The active-site Proton acceptor is Tyr-31. Residues Asn-82, His-88, and Asp-95 each contribute to the substrate site. The active-site Proton donor is the His-109. Substrate is bound by residues 110 to 111 (IS) and Arg-120.

It belongs to the type-II 3-dehydroquinase family. As to quaternary structure, homododecamer.

It catalyses the reaction 3-dehydroquinate = 3-dehydroshikimate + H2O. It functions in the pathway metabolic intermediate biosynthesis; chorismate biosynthesis; chorismate from D-erythrose 4-phosphate and phosphoenolpyruvate: step 3/7. In terms of biological role, catalyzes a trans-dehydration via an enolate intermediate. This chain is 3-dehydroquinate dehydratase, found in Streptomyces avermitilis (strain ATCC 31267 / DSM 46492 / JCM 5070 / NBRC 14893 / NCIMB 12804 / NRRL 8165 / MA-4680).